We begin with the raw amino-acid sequence, 417 residues long: Echinulin prenyltransferase 1 (417 aa).

Dimethylallyl diphosphate contacts are provided by arginine 90, lysine 179, tyrosine 181, lysine 248, tyrosine 250, tyrosine 333, tyrosine 398, and tyrosine 402.

It belongs to the tryptophan dimethylallyltransferase family.

It carries out the reaction cyclo(L-tryptophyl-L-alanyl) + dimethylallyl diphosphate = preechinulin + diphosphate. It participates in secondary metabolite biosynthesis. It functions in the pathway alkaloid biosynthesis. Its function is as follows. Prenyltransferase; part of the gene cluster that mediates the biosynthesis of echinulin family alkaloid. The pathway begins with the biosynthesis of the cyclic dipeptide cyclo-L-Trp-L-Ala (cyclo-TA) by the NRPS echPS via condensation of L-alanine and L-tryptophan. The prenyltransferase echPT1 then catalyzes the first prenylation step, a reverse prenylation reaction at C2, to yield preechinulin. Preechinulin is the substrate of the cytochrome P450 monooxygenase echP450 that catalyzes the formation of the double bond between C10 and C11 to produce neoechulin A. The unique prenyltransferase echPT2 functions as a competitive enzyme with echP450 for preechinulin metabolization and uses preechinulin for effective regiospecific prenylations. Preechinulin is prenylated by echPT2 at C5 or C7. C7-prenylation leads to accumulation of tardioxopiperazine B without further modification by echPT2. In contrast, the C5-prenylated tardioxopiperazine A can be prenylated again by echPT2, predominantly at C7 to form echinulin or less frequently at C4 to give variecolorin L. EchPT2 also accepts neoechilunin A to produce varlecolorin G (prenylation at C5) or isoechinulin A (prenylation at C7). EchPT2 further converts isoechinulin A into dehydroechinulin. Moreover, a yet unidentified enzyme can also convert neoechilunin A into neoechilunin B by introducing a double bond between positions C14 and C17 and thus provides a further substrate to echPT2 for C5 and C7 prenylation. The protein is Echinulin prenyltransferase 1 of Aspergillus ruber (Eurotium rubrum).